Here is a 606-residue protein sequence, read N- to C-terminus: Ribonucleoprotein PTB-binding 1 (606 aa).

The tract at residues M1–P41 is disordered. Position 2 is an N-acetylalanine (A2). A phosphoserine mark is found at S6 and S14. Positions R45–K60 match the Nuclear localization signal motif. 3 consecutive RRM domains span residues R59 to T130, A132 to A210, and R221 to P299. Residues L307–I395 form an interaction with PTBP1 region. A disordered region spans residues K391–S474. Residues L453–L462 are compositionally biased toward low complexity. The residue at position 463 (T463) is a Phosphothreonine. Position 474 is a phosphoserine (S474). P488 is modified (phosphothreonine). The tract at residues G519 to S564 is disordered. Residues S562 and H567 each carry the phosphoserine modification. The interval C579–T606 is disordered. A compositionally biased stretch (low complexity) spans A592–T606.

Interacts with PTBP1, RAVER2, VCL and ACTN1. Part of a complex containing RAVER1, VCL and ACTN1.

It is found in the nucleus. The protein resides in the cytoplasm. Functionally, cooperates with PTBP1 to modulate regulated alternative splicing events. Promotes exon skipping. Cooperates with PTBP1 to modulate switching between mutually exclusive exons during maturation of the TPM1 pre-mRNA. This Homo sapiens (Human) protein is Ribonucleoprotein PTB-binding 1 (RAVER1).